Consider the following 703-residue polypeptide: Elongation factor G (703 aa).

Residues 8-290 (ARYRNIGICA…AVIEYLPAPT (283 aa)) enclose the tr-type G domain. GTP contacts are provided by residues 17–24 (AHVDAGKT), 88–92 (DTPGH), and 142–145 (NKMD).

It belongs to the TRAFAC class translation factor GTPase superfamily. Classic translation factor GTPase family. EF-G/EF-2 subfamily.

The protein resides in the cytoplasm. Functionally, catalyzes the GTP-dependent ribosomal translocation step during translation elongation. During this step, the ribosome changes from the pre-translocational (PRE) to the post-translocational (POST) state as the newly formed A-site-bound peptidyl-tRNA and P-site-bound deacylated tRNA move to the P and E sites, respectively. Catalyzes the coordinated movement of the two tRNA molecules, the mRNA and conformational changes in the ribosome. In Teredinibacter turnerae (strain ATCC 39867 / T7901), this protein is Elongation factor G.